Here is a 474-residue protein sequence, read N- to C-terminus: Glutamate--tRNA ligase (474 aa).

The short motif at 18–28 is the 'HIGH' region element; that stretch reads PSPTGFLHIGG. A 'KMSKS' region motif is present at residues 244–248; that stretch reads KLSKR. Lysine 247 serves as a coordination point for ATP.

This sequence belongs to the class-I aminoacyl-tRNA synthetase family. Glutamate--tRNA ligase type 1 subfamily. Monomer.

It localises to the cytoplasm. It catalyses the reaction tRNA(Glu) + L-glutamate + ATP = L-glutamyl-tRNA(Glu) + AMP + diphosphate. Functionally, catalyzes the attachment of glutamate to tRNA(Glu) in a two-step reaction: glutamate is first activated by ATP to form Glu-AMP and then transferred to the acceptor end of tRNA(Glu). The chain is Glutamate--tRNA ligase from Caulobacter sp. (strain K31).